We begin with the raw amino-acid sequence, 95 residues long: MRQYEMMIIIDPSQDERTVAPSLDKYLDIVRKENGSVEKVDIWGKRRLEYPINKKDEGIYVVLDLKCESATVLEIDRLLNINDQILRTKVLRKDQ.

This sequence belongs to the bacterial ribosomal protein bS6 family.

Binds together with bS18 to 16S ribosomal RNA. This Corynebacterium jeikeium (strain K411) protein is Small ribosomal subunit protein bS6.